We begin with the raw amino-acid sequence, 539 residues long: Phosphoenolpyruvate carboxykinase (ATP) (539 aa).

Substrate-binding residues include R64, Y206, and K212. ATP contacts are provided by residues K212, H231, and 247 to 255 (GLSGTGKTT). Positions 212 and 231 each coordinate Mn(2+). A Mn(2+)-binding site is contributed by D268. Residues E296, R332, 448 to 449 (RI), and T454 each bind ATP. Residue R332 participates in substrate binding.

The protein belongs to the phosphoenolpyruvate carboxykinase (ATP) family. In terms of assembly, monomer. It depends on Mn(2+) as a cofactor.

It localises to the cytoplasm. It catalyses the reaction oxaloacetate + ATP = phosphoenolpyruvate + ADP + CO2. Its pathway is carbohydrate biosynthesis; gluconeogenesis. In terms of biological role, involved in the gluconeogenesis. Catalyzes the conversion of oxaloacetate (OAA) to phosphoenolpyruvate (PEP) through direct phosphoryl transfer between the nucleoside triphosphate and OAA. The protein is Phosphoenolpyruvate carboxykinase (ATP) of Erwinia tasmaniensis (strain DSM 17950 / CFBP 7177 / CIP 109463 / NCPPB 4357 / Et1/99).